A 381-amino-acid polypeptide reads, in one-letter code: Probable serine/threonine-protein kinase PBL22 (381 aa).

Residue Cys-3 is the site of S-palmitoyl cysteine attachment. Thr-64 bears the Phosphothreonine mark. The 277-residue stretch at Phe-75–Ile-351 folds into the Protein kinase domain. Residues Ile-81 to Val-89 and Lys-103 contribute to the ATP site. Tyr-148 carries the phosphotyrosine modification. The active-site Proton acceptor is the Asp-201. A Phosphoserine modification is found at Ser-235. A phosphothreonine mark is found at Thr-236 and Thr-241. The residue at position 249 (Tyr-249) is a Phosphotyrosine. The segment at Arg-361 to Tyr-381 is disordered.

This sequence belongs to the protein kinase superfamily. Ser/Thr protein kinase family. Palmitoylation at Cys-3 and Cys-6 are required for plasma membrane location.

Its subcellular location is the cell membrane. The catalysed reaction is L-seryl-[protein] + ATP = O-phospho-L-seryl-[protein] + ADP + H(+). It catalyses the reaction L-threonyl-[protein] + ATP = O-phospho-L-threonyl-[protein] + ADP + H(+). In terms of biological role, may be involved in plant defense signaling. The sequence is that of Probable serine/threonine-protein kinase PBL22 from Arabidopsis thaliana (Mouse-ear cress).